The following is a 685-amino-acid chain: ATP-dependent zinc metalloprotease FTSH 8, chloroplastic (685 aa).

The transit peptide at 1-37 directs the protein to the chloroplast; the sequence is MAASSACLLGNGLSVYTTKQRFQKLGLDRTSKVTVVK. A thylakoid-targeting transit peptide spans 38–73; it reads ASLDEKKHEGRRGFFKLLLGNAAAGVGLLASGNANA. The Lumenal, thylakoid segment spans residues 38 to 161; that stretch reads ASLDEKKHEG…HNAQEDQGSP (124 aa). The helical transmembrane segment at 162-182 threads the bilayer; it reads ILNLIGNLAFPVILIGGLFLL. Over 183–685 the chain is Stromal; that stretch reads SRRSSGGMGG…STSTPTPASV (503 aa). Residue 260–267 coordinates ATP; the sequence is GPPGTGKT. His-481 contacts Zn(2+). Residue Glu-482 is part of the active site. The Zn(2+) site is built by His-485 and Asp-559.

This sequence in the N-terminal section; belongs to the AAA ATPase family. The protein in the C-terminal section; belongs to the peptidase M41 family. In terms of assembly, heterohexamers with FTSH1, FTSH2 and FTSH5. May also form homooligomers. Zn(2+) serves as cofactor. As to expression, expressed in cotyledons, cauline and rosette leaves, stems, sepals, flovers and siliques. Very low in roots.

Its subcellular location is the plastid. It is found in the chloroplast thylakoid membrane. Functionally, part of a complex that function as an ATP-dependent zinc metallopeptidase. Involved in the thylakoid formation and in the removal of damaged D1 in the photosystem II, preventing cell death under high-intensity light conditions. This is ATP-dependent zinc metalloprotease FTSH 8, chloroplastic (FTSH8) from Arabidopsis thaliana (Mouse-ear cress).